The chain runs to 155 residues: 6,7-dimethyl-8-ribityllumazine synthase (155 aa).

5-amino-6-(D-ribitylamino)uracil contacts are provided by residues F24, 58–60, and 82–84; these read AFE and AVI. 87 to 88 provides a ligand contact to (2S)-2-hydroxy-3-oxobutyl phosphate; it reads ST. The active-site Proton donor is the H90. F115 provides a ligand contact to 5-amino-6-(D-ribitylamino)uracil. R129 contacts (2S)-2-hydroxy-3-oxobutyl phosphate.

It belongs to the DMRL synthase family.

It catalyses the reaction (2S)-2-hydroxy-3-oxobutyl phosphate + 5-amino-6-(D-ribitylamino)uracil = 6,7-dimethyl-8-(1-D-ribityl)lumazine + phosphate + 2 H2O + H(+). The protein operates within cofactor biosynthesis; riboflavin biosynthesis; riboflavin from 2-hydroxy-3-oxobutyl phosphate and 5-amino-6-(D-ribitylamino)uracil: step 1/2. Functionally, catalyzes the formation of 6,7-dimethyl-8-ribityllumazine by condensation of 5-amino-6-(D-ribitylamino)uracil with 3,4-dihydroxy-2-butanone 4-phosphate. This is the penultimate step in the biosynthesis of riboflavin. The protein is 6,7-dimethyl-8-ribityllumazine synthase of Acetivibrio thermocellus (strain ATCC 27405 / DSM 1237 / JCM 9322 / NBRC 103400 / NCIMB 10682 / NRRL B-4536 / VPI 7372) (Clostridium thermocellum).